A 259-amino-acid chain; its full sequence is MQTVCASLCGYARIPTEEPSYEEVRVNTHPQGAALLRLQEALTAVNGLLPAPLTLEDVVASADNTRRLVRAQALARTYAACSRNIECLKQHHFTEDNPGLNAVVRSHMENSKRLADMCLAAITHLYLSVGAVDVTTDDIVDQTLRMTAESEVVMSDVVLLEKTLGVVAKPQASFDVSHNHELSIAKGENVGLKTSPIKSEATQLSEIKPPLIEVSDNNTSNLTKKTYPTETLQPVLTPKQTQDVQRTTPAIKKSHVMLV.

Cys9 carries S-palmitoyl cysteine; by host lipidation.

The protein belongs to the herpesviridae UL51 family. As to quaternary structure, oligomerizes. Interacts with ORF53; this interaction mediates ORF53 incorporation to virions. Phosphorylated. In terms of processing, palmitoylation is necessary for Golgi localization.

The protein localises to the virion tegument. It is found in the host cytoplasm. It localises to the host Golgi apparatus. In terms of biological role, plays several roles during the time course of infection, including egress of virus particles from the perinuclear space and secondary envelopment of cytoplasmic capsids that bud into specific trans-Golgi network (TGN)-derived membranes. This Varicella-zoster virus (strain Dumas) (HHV-3) protein is Tegument protein UL51 homolog.